The primary structure comprises 310 residues: Translocator protein BipD (310 aa).

2 coiled-coil regions span residues 127-171 (DPIL…LQDY) and 250-299 (DTAR…AIST).

The protein belongs to the invasin protein D family.

The protein localises to the secreted. Its function is as follows. Required for invasion of epithelial cells, as well as for survival within host cells, escape from endocytic vesicles and subsequent actin-tail formation. Probably regulates the secretion of effectors BipB and BipC and their final integration into the target cell membrane. This Burkholderia mallei (strain NCTC 10247) protein is Translocator protein BipD (bipD).